The following is a 306-amino-acid chain: MELKDYYAIMGVKPTDDLKTIKTAYRRLARKYHPDVSKEPDAEARFKEVAEAWEVLSDEQRRAEYDQMWQHRNDPQFNRQFHHGDGQSFNAEDFDDIFSSIFGQHARQSRQRPAARGHDIEIEVAVFLEETLTEHKRTISYNLPVYNAFGMIEQEIPKTLNVKIPAGVGNGQRIRLKGQGTPGENGGPNGDLWLVIHIAPHPLFDIVGQDLEIVVPVSPWEAALGTKVTVPTLKESILLTIPPGSQAGQRLRVKGKGLVSKKQTGDLYAVLKIVMPPKPDENTAALWQQLADAQSSFDPRKDWGKA.

Residues 5–69 (DYYAIMGVKP…QRRAEYDQMW (65 aa)) enclose the J domain.

It is found in the cytoplasm. The protein localises to the nucleoid. Its function is as follows. DNA-binding protein that preferentially recognizes a curved DNA sequence. It is probably a functional analog of DnaJ; displays overlapping activities with DnaJ, but functions under different conditions, probably acting as a molecular chaperone in an adaptive response to environmental stresses other than heat shock. Lacks autonomous chaperone activity; binds native substrates and targets them for recognition by DnaK. Its activity is inhibited by the binding of CbpM. The protein is Curved DNA-binding protein of Shigella flexneri.